The chain runs to 310 residues: D-alanyl-D-alanine endopeptidase (310 aa).

A signal peptide spans 1–25 (MPKFRVSLFSLALMLAVPFAPQAVA). The active-site Acyl-ester intermediate is Ser-67. The active-site Proton acceptor is the Lys-70. The active site involves Ser-124. Substrate is bound at residue Lys-231.

It belongs to the peptidase S11 family. Post-translationally, pbp8 is a proteolytic product of Pbp7.

Its subcellular location is the periplasm. In terms of biological role, cell wall formation. May play a specialized role in remodeling the cell wall. Specifically hydrolyzes the DD-diaminopimelate-alanine bonds in high-molecular-mass murein sacculi. This is D-alanyl-D-alanine endopeptidase (pbpG) from Escherichia coli (strain K12).